The chain runs to 252 residues: 2-succinyl-6-hydroxy-2,4-cyclohexadiene-1-carboxylate synthase (252 aa).

It belongs to the AB hydrolase superfamily. MenH family. Monomer.

It catalyses the reaction 5-enolpyruvoyl-6-hydroxy-2-succinyl-cyclohex-3-ene-1-carboxylate = (1R,6R)-6-hydroxy-2-succinyl-cyclohexa-2,4-diene-1-carboxylate + pyruvate. Its pathway is quinol/quinone metabolism; 1,4-dihydroxy-2-naphthoate biosynthesis; 1,4-dihydroxy-2-naphthoate from chorismate: step 3/7. The protein operates within quinol/quinone metabolism; menaquinone biosynthesis. Its function is as follows. Catalyzes a proton abstraction reaction that results in 2,5-elimination of pyruvate from 2-succinyl-5-enolpyruvyl-6-hydroxy-3-cyclohexene-1-carboxylate (SEPHCHC) and the formation of 2-succinyl-6-hydroxy-2,4-cyclohexadiene-1-carboxylate (SHCHC). The sequence is that of 2-succinyl-6-hydroxy-2,4-cyclohexadiene-1-carboxylate synthase from Klebsiella pneumoniae subsp. pneumoniae (strain ATCC 700721 / MGH 78578).